The sequence spans 182 residues: Large ribosomal subunit protein uL5 (182 aa).

It belongs to the universal ribosomal protein uL5 family. Part of the 50S ribosomal subunit; part of the 5S rRNA/L5/L18/L25 subcomplex. Contacts the 5S rRNA and the P site tRNA. Forms a bridge to the 30S subunit in the 70S ribosome.

Its function is as follows. This is one of the proteins that bind and probably mediate the attachment of the 5S RNA into the large ribosomal subunit, where it forms part of the central protuberance. In the 70S ribosome it contacts protein S13 of the 30S subunit (bridge B1b), connecting the 2 subunits; this bridge is implicated in subunit movement. Contacts the P site tRNA; the 5S rRNA and some of its associated proteins might help stabilize positioning of ribosome-bound tRNAs. The polypeptide is Large ribosomal subunit protein uL5 (Thermus aquaticus).